Reading from the N-terminus, the 192-residue chain is uncharacterized protein (192 aa).

This is an uncharacterized protein from Acanthamoeba polyphaga mimivirus (APMV).